Here is a 349-residue protein sequence, read N- to C-terminus: 4-hydroxythreonine-4-phosphate dehydrogenase (349 aa).

Substrate-binding residues include histidine 141 and threonine 142. 3 residues coordinate a divalent metal cation: histidine 176, histidine 221, and histidine 276. Substrate contacts are provided by lysine 284, asparagine 293, and arginine 302.

Belongs to the PdxA family. Homodimer. Zn(2+) is required as a cofactor. Requires Mg(2+) as cofactor. It depends on Co(2+) as a cofactor.

The protein localises to the cytoplasm. It carries out the reaction 4-(phosphooxy)-L-threonine + NAD(+) = 3-amino-2-oxopropyl phosphate + CO2 + NADH. It participates in cofactor biosynthesis; pyridoxine 5'-phosphate biosynthesis; pyridoxine 5'-phosphate from D-erythrose 4-phosphate: step 4/5. In terms of biological role, catalyzes the NAD(P)-dependent oxidation of 4-(phosphooxy)-L-threonine (HTP) into 2-amino-3-oxo-4-(phosphooxy)butyric acid which spontaneously decarboxylates to form 3-amino-2-oxopropyl phosphate (AHAP). The chain is 4-hydroxythreonine-4-phosphate dehydrogenase from Methylorubrum extorquens (strain PA1) (Methylobacterium extorquens).